The following is a 106-amino-acid chain: Large ribosomal subunit protein uL24 (106 aa).

The protein belongs to the universal ribosomal protein uL24 family. In terms of assembly, part of the 50S ribosomal subunit.

Its function is as follows. One of two assembly initiator proteins, it binds directly to the 5'-end of the 23S rRNA, where it nucleates assembly of the 50S subunit. Functionally, one of the proteins that surrounds the polypeptide exit tunnel on the outside of the subunit. This chain is Large ribosomal subunit protein uL24, found in Acidiphilium cryptum (strain JF-5).